Here is a 412-residue protein sequence, read N- to C-terminus: Glutamate-pyruvate aminotransferase AlaC (412 aa).

The residue at position 244 (lysine 244) is an N6-(pyridoxal phosphate)lysine.

The protein belongs to the class-I pyridoxal-phosphate-dependent aminotransferase family. As to quaternary structure, homodimer. Pyridoxal 5'-phosphate is required as a cofactor.

It is found in the cytoplasm. The enzyme catalyses L-alanine + 2-oxoglutarate = pyruvate + L-glutamate. It participates in amino-acid biosynthesis; L-alanine biosynthesis. In terms of biological role, involved in the biosynthesis of alanine. Catalyzes the transamination of pyruvate by glutamate, leading to the formation of L-alanine and 2-oxoglutarate. Is also able to catalyze the reverse reaction. The chain is Glutamate-pyruvate aminotransferase AlaC from Escherichia coli (strain K12).